Consider the following 297-residue polypeptide: F-box only protein 2 (297 aa).

The tract at residues 1 to 42 (MDGDGDPESVGQPEEASPEEQQEEACAEEANGGEERPEDDGE) is disordered. The segment covering 16 to 27 (ASPEEQQEEACA) has biased composition (acidic residues). The F-box domain maps to 45–92 (AAYLDELPEPLLLRVLAELPAAQLVQACRLVCLRWKELVDGAPLWLLK). The FBA domain occupies 114-297 (FYFLSKRRRN…VTNSSVWVEP (184 aa)). A carbohydrate contacts are provided by residues 211–213 (RRD) and 279–280 (YW).

In terms of assembly, component of the SCF(FBXO2) complex consisting of CUL1, RBX1, SKP1 and FBXO2. Predominantly detected as heterodimer with SKP1; the heterodimer with SKP1 is not part of the SCF(FBXO2) complex.

Its subcellular location is the cytoplasm. The protein localises to the microsome membrane. It functions in the pathway protein modification; protein ubiquitination. Functionally, substrate recognition component of a SCF (SKP1-CUL1-F-box protein) E3 ubiquitin-protein ligase complex that mediates the ubiquitination and subsequent proteasomal degradation of target proteins. Involved in the endoplasmic reticulum-associated degradation pathway (ERAD) for misfolded lumenal proteins by recognizing and binding sugar chains on unfolded glycoproteins that are retrotranslocated into the cytosol and promoting their ubiquitination and subsequent degradation. Prevents formation of cytosolic aggregates of unfolded glycoproteins that have been retrotranslocated into the cytosol. Able to recognize and bind denatured glycoproteins, preferentially those of the high-mannose type. In Bos taurus (Bovine), this protein is F-box only protein 2 (FBXO2).